We begin with the raw amino-acid sequence, 283 residues long: Glutamate racemase (283 aa).

Substrate is bound by residues 7–8 (DS) and 39–40 (YG). Catalysis depends on Cys70, which acts as the Proton donor/acceptor. Position 71-72 (71-72 (NT)) interacts with substrate. Cys206 (proton donor/acceptor) is an active-site residue. Position 207 to 208 (207 to 208 (TH)) interacts with substrate.

It belongs to the aspartate/glutamate racemases family.

The catalysed reaction is L-glutamate = D-glutamate. It participates in cell wall biogenesis; peptidoglycan biosynthesis. Its function is as follows. Provides the (R)-glutamate required for cell wall biosynthesis. The sequence is that of Glutamate racemase from Caulobacter sp. (strain K31).